Here is a 988-residue protein sequence, read N- to C-terminus: Voltage-gated delayed rectifier potassium channel KCNH5 (988 aa).

Over 1–217 (MPGGKRGLVA…LHYCAFKTTW (217 aa)) the chain is Cytoplasmic. The region spanning 14-86 (TFLENIVRRS…TIEKVRQTFD (73 aa)) is the PAS domain. The 53-residue stretch at 91-143 (NCFEVLLYKKNRTPVWFYMQIAPIRNEHEKVVLFLCTFKDITLFKQPIEDDST) folds into the PAC domain. Residues 218-238 (DWVILILTFYTAIMVPYNVSF) traverse the membrane as a helical segment. At 239-243 (KTKQN) the chain is on the extracellular side. Residues 244–264 (NIAWLVLDSVVDVIFLVDIVL) form a helical membrane-spanning segment. Over 265-291 (NFHTTFVGPGGEVISDPKLIRMNYLKT) the chain is Cytoplasmic. Residues 292 to 312 (WFVIDLLSCLPYDIINAFENV) form a helical membrane-spanning segment. At 313-319 (DEGISSL) the chain is on the extracellular side. The helical; Voltage-sensor transmembrane segment at 320–340 (FSSLKVVRLLRLGRVARKLDH) threads the bilayer. At 341–346 (YLEYGA) the chain is on the cytoplasmic side. Residues 347–367 (AVLVLLVCVFGLVAHWLACIW) traverse the membrane as a helical segment. Residues 368-419 (YSIGDYEVIDEVTNTIQIDSWLYQLALSIGTPYRYNTSAGIWEGGPSKDSLY) lie on the Extracellular side of the membrane. Asn-403 is a glycosylation site (N-linked (GlcNAc...) asparagine). The segment at residues 420–440 (VSSLYFTMTSLTTIGFGNIAP) is an intramembrane region (pore-forming). Residues 432–437 (TIGFGN) carry the Selectivity filter motif. Residues 441-446 (TTDVEK) lie on the Extracellular side of the membrane. A helical membrane pass occupies residues 447 to 467 (MFSVAMMMVGSLLYATIFGNV). Over 468 to 988 (TTIFQQMYAN…PESDKDEINF (521 aa)) the chain is Cytoplasmic. Position 550–667 (550–667 (AFRLASDGCL…NSFSRNLTLT (118 aa))) interacts with a nucleoside 3',5'-cyclic phosphate. The calmodulin-binding stretch occupies residues 704–715 (HPVRKLFQKFKQ). A disordered region spans residues 718–742 (ELRNQGSAQSDPERSQLQVESRPLQ). The segment covering 721-742 (NQGSAQSDPERSQLQVESRPLQ) has biased composition (polar residues). A Glycyl lysine isopeptide (Lys-Gly) (interchain with G-Cter in ubiquitin) cross-link involves residue Lys-785. Disordered regions lie at residues 839–897 (LLSE…AKHP) and 946–965 (SVPQ…PPQI). A compositionally biased stretch (basic and acidic residues) spans 871 to 885 (SDLRLDKAGEARSPL). Ser-883 is subject to Phosphoserine. A CAD (involved in subunit assembly) region spans residues 909–948 (TLQEVKHELKEDIQLLSCRMTALEKQVAEILKLLSEKSVP).

Belongs to the potassium channel family. H (Eag) (TC 1.A.1.20) subfamily. Kv10.2/KCNH5 sub-subfamily. In terms of assembly, homotetramer. The potassium channel is probably composed of a homo- or heterotetrameric complex of pore-forming alpha subunits that can associate with modulating beta subunits. Heteromultimer with KCNH1/EAG. Detected in adult testis and in embryonic and adult brain, but not in other tissues. Highly expressed in specific brain areas, such as neocortex, olfactory bulb, primary olfactory cortex and brain stem. In cortex, expression is concentrated in a narrow band toward the middle lamella (layer IV). Moderately expressed in spinal cord, dorsal thalamic nuclei, medial hypothalamus, colliculus, lateral lemniscus, pontine nuclei and Islands of Calleja.

The protein resides in the membrane. The enzyme catalyses K(+)(in) = K(+)(out). Its activity is regulated as follows. Inhibited by low nanomolar concentrations of cytosolic calcium. In terms of biological role, pore-forming (alpha) subunit of a voltage-gated delayed rectifier potassium channel that mediates outward-rectifying potassium currents which, on depolarization, reaches a steady-state level and do not inactivate. The kinetic is characterized by a slow activation time course and a small voltage dependence of the activation time constants, therefore, starts to open at more negative voltages. The activation kinetics depend on the prepulse potential and external divalent cation concentration. The time course of activation is biphasic with a fast and a slowly activating current component. With negative prepulses, the current activation is delayed and slowed down several fold, whereas more positive prepulses speed up activation, therefore the activation rate depends on holding potential. This chain is Voltage-gated delayed rectifier potassium channel KCNH5, found in Rattus norvegicus (Rat).